The chain runs to 463 residues: ATP synthase subunit beta (463 aa).

153–160 (GGAGVGKT) is an ATP binding site.

This sequence belongs to the ATPase alpha/beta chains family. F-type ATPases have 2 components, CF(1) - the catalytic core - and CF(0) - the membrane proton channel. CF(1) has five subunits: alpha(3), beta(3), gamma(1), delta(1), epsilon(1). CF(0) has three main subunits: a(1), b(2) and c(9-12). The alpha and beta chains form an alternating ring which encloses part of the gamma chain. CF(1) is attached to CF(0) by a central stalk formed by the gamma and epsilon chains, while a peripheral stalk is formed by the delta and b chains.

Its subcellular location is the cell inner membrane. The catalysed reaction is ATP + H2O + 4 H(+)(in) = ADP + phosphate + 5 H(+)(out). Produces ATP from ADP in the presence of a proton gradient across the membrane. The catalytic sites are hosted primarily by the beta subunits. The sequence is that of ATP synthase subunit beta from Burkholderia cepacia (Pseudomonas cepacia).